The sequence spans 424 residues: 5,5'-dehydrodivanillate O-demethylase oxygenase subunit (424 aa).

The Rieske domain occupies 27–135; the sequence is WHPIGGESEF…VRALGGLLWA (109 aa). C68, H70, C87, and H90 together coordinate [2Fe-2S] cluster. Residues H181, H186, and D306 each contribute to the Fe cation site.

The protein belongs to the bacterial ring-hydroxylating dioxygenase alpha subunit family. As to quaternary structure, homotrimer. The three-component monooxygenase is composed of an oxygenase (LigXa), a ferredoxin (LigXc) and a ferredoxin reductase (LigXd). [2Fe-2S] cluster serves as cofactor. Requires Fe cation as cofactor.

The enzyme catalyses 5,5'-dehydrodivanillate + NADH + O2 + H(+) = 2,2',3-trihydroxy-3'-methoxy-5,5'-dicarboxybiphenyl + formaldehyde + NAD(+) + H2O. Involved in the catabolism of 5,5'-dehydrodivanillate (DDVA), an intermediate in the biodegradation of lignin. Part of a three-component monooxygenase that catalyzes the O-demethylation of DDVA, leading to the formation of 2,2',3-trihydroxy-3'-methoxy-5,5'-dicarboxybiphenyl (OH-DDVA). In Sphingobium sp. (strain NBRC 103272 / SYK-6), this protein is 5,5'-dehydrodivanillate O-demethylase oxygenase subunit.